The following is a 93-amino-acid chain: MKENYNYPLDLSWSTTEMTEVLSFFNQVEKFYESKVEKELFLESYAAFKKVVPSKMQEKQLGRDFEQSSGYSLYRALKEVEASGKRFVSADKA.

It belongs to the UPF0223 family.

The protein is UPF0223 protein LACR_0546 of Lactococcus lactis subsp. cremoris (strain SK11).